Here is a 101-residue protein sequence, read N- to C-terminus: Large ribosomal subunit protein uL23 (101 aa).

This sequence belongs to the universal ribosomal protein uL23 family. As to quaternary structure, part of the 50S ribosomal subunit. Contacts protein L29, and trigger factor when it is bound to the ribosome.

Functionally, one of the early assembly proteins it binds 23S rRNA. One of the proteins that surrounds the polypeptide exit tunnel on the outside of the ribosome. Forms the main docking site for trigger factor binding to the ribosome. The chain is Large ribosomal subunit protein uL23 from Corynebacterium kroppenstedtii (strain DSM 44385 / JCM 11950 / CIP 105744 / CCUG 35717).